We begin with the raw amino-acid sequence, 375 residues long: CD2 homolog (375 aa).

The first 16 residues, 1–16 (MIIILIFLIIPNIVLS), serve as a signal peptide directing secretion. At 17-207 (IDYWVSFNKT…YLDFFQVASY (191 aa)) the chain is on the extracellular side. N-linked (GlcNAc...) asparagine; by host glycosylation is found at Asn-24, Asn-80, Asn-105, Asn-122, Asn-134, Asn-145, Asn-168, Asn-176, and Asn-183. 2 disulfide bridges follow: Cys-123–Cys-190 and Cys-130–Cys-173. A helical membrane pass occupies residues 208 to 228 (MFYMIIFIATGIIASIFISII). Residues 229–375 (TFLSLRKRKK…ISLIHVDRII (147 aa)) are Cytoplasmic-facing. Residues 242-278 (EIESPSPSESNEEEQCQHDDTTSIHEPSPREPLLPKP) are disordered. Residues 256–270 (QCQHDDTTSIHEPSP) show a composition bias toward basic and acidic residues. 5 tandem repeats follow at residues 305–310 (KLCPPP), 311–316 (KPCPPP), 317–322 (KPCPPP), 323–328 (KPCPPP), and 329–334 (KPCPSS). The segment at 305-334 (KLCPPPKPCPPPKPCPPPKPCPPPKPCPSS) is 5 X 6 AA tandem repeats of K-[LP]-C-[PRS]-[PS]-[PS]. Positions 323–350 (KPCPPPKPCPSSESCSPPESYSLPKPLP) are disordered. The span at 332–346 (PSSESCSPPESYSLP) shows a compositional bias: low complexity.

The protein belongs to the asfivirus CD2 homolog protein family. As to quaternary structure, both glycosylated and nonglycosylated forms interact (via C-terminus) with the host AP-1 complex. Post-translationally, cleaved into two fragments of 63 kDa and 26 kDa containing respectively the glycosylated N-terminus and the nonglycosylated C-terminus. A full-length 89-kDa glycosylated form also exists.

It is found in the host membrane. The protein localises to the virion membrane. The protein resides in the host Golgi apparatus. Its function is as follows. May play an immunosuppressive role by inhibiting lymphocyte proliferation and subsequently facilitating viral replication and generalization of infection. Responsible for viral hemadsorption, which may help viral spread. Increases virus replication in the tick vector at the step of virus uptake or replication in the tick gut. May play a role in the host Golgi reorganization to yield viral factories. May play a role in host cell penetration. This Ornithodoros (relapsing fever ticks) protein is CD2 homolog.